We begin with the raw amino-acid sequence, 180 residues long: Cytidylate kinase (180 aa).

Residue 7 to 15 coordinates ATP; sequence GLPGSGTST.

The protein belongs to the cytidylate kinase family. Type 2 subfamily.

It localises to the cytoplasm. The catalysed reaction is CMP + ATP = CDP + ADP. It catalyses the reaction dCMP + ATP = dCDP + ADP. This Methanosarcina mazei (strain ATCC BAA-159 / DSM 3647 / Goe1 / Go1 / JCM 11833 / OCM 88) (Methanosarcina frisia) protein is Cytidylate kinase (cmk).